We begin with the raw amino-acid sequence, 1325 residues long: ATP-binding cassette sub-family C member 4 (1325 aa).

The 286-residue stretch at 92-377 (YLVLGIFTLI…FFPSAIERVS (286 aa)) folds into the ABC transmembrane type-1 1 domain. Helical transmembrane passes span 93–113 (LVLGIFTLIEESAKVIQPIFL), 136–156 (AYATVLTFCTLILAILHHLYF), 207–227 (QVTVFLHFLWAGPLQAIAVTA), 228–248 (LLWMEIGISCLAGMAVLIILL), 328–348 (SKIIVFVTFTTYVLLGSVITA), 351–371 (VFVAVTLYGAVRLTVTLFFPS), and 440–460 (LLAVVGPVGAGKSSLLSAVLG). The ABC transporter 1 domain maps to 410–633 (VHVQDFTAFW…GIDFGSLLKK (224 aa)). 445-452 (GPVGAGKS) is a binding site for ATP. Residues threonine 646 and threonine 648 each carry the phosphothreonine modification. Low complexity predominate over residues 657-667 (SSVWSQQSSRP). The segment at 657–688 (SSVWSQQSSRPSLKDGALESQDTENVPVTLSE) is disordered. 2 positions are modified to phosphoserine: serine 664 and serine 668. A helical membrane pass occupies residues 710-730 (HWIVFIFLILLNTAAQVAYVL). The ABC transmembrane type-1 2 domain occupies 714–1005 (FIFLILLNTA…CVRQSAEVEN (292 aa)). 2 N-linked (GlcNAc...) asparagine glycosylation sites follow: asparagine 746 and asparagine 754. 6 helical membrane-spanning segments follow: residues 771–791 (LTVATVLFGIARSLLVFYVLV), 836–856 (LPLTFLDFIQTLLQVVGVVSV), 858–878 (VAVIPWIAIPLVPLGIIFIFL), 954–974 (AICAMFVIIVAFGSLILAKTL), 977–997 (GQVGLALSYALTLMGMFQWCV), and 1038–1058 (EGVIIFDNVNFMYSPGGPLVL). Residues 1041-1274 (IIFDNVNFMY…KESLFYKMVQ (234 aa)) enclose the ABC transporter 2 domain. 1075-1082 (GRTGAGKS) contributes to the ATP binding site. Residues 1322-1325 (ETAL) carry the PDZ-binding motif.

This sequence belongs to the ABC transporter superfamily. ABCC family. Conjugate transporter (TC 3.A.1.208) subfamily. Interacts (via PDZ-binding motif) with SNX27 (via PDZ domain); this interaction accelerates MRP4 internalization. The cofactor is Mg(2+). In terms of processing, N-glycosylated; leading to substrate-selective effects on its transport activity. Widely expressed, with particularly high levels in prostate, but is barely detectable in liver. sinusoidal membrane of hepatocytes.

Its subcellular location is the basolateral cell membrane. The protein localises to the apical cell membrane. The catalysed reaction is ATP + H2O + xenobioticSide 1 = ADP + phosphate + xenobioticSide 2.. It carries out the reaction an S-substituted glutathione(in) + ATP + H2O = an S-substituted glutathione(out) + ADP + phosphate + H(+). It catalyses the reaction 17beta-estradiol 17-O-(beta-D-glucuronate)(in) + ATP + H2O = 17beta-estradiol 17-O-(beta-D-glucuronate)(out) + ADP + phosphate + H(+). The enzyme catalyses dehydroepiandrosterone 3-sulfate(in) + ATP + H2O = dehydroepiandrosterone 3-sulfate(out) + ADP + phosphate + H(+). The catalysed reaction is leukotriene C4(in) + ATP + H2O = leukotriene C4(out) + ADP + phosphate + H(+). It carries out the reaction leukotriene B4(in) + ATP + H2O = leukotriene B4(out) + ADP + phosphate + H(+). It catalyses the reaction urate(in) + ATP + H2O = urate(out) + ADP + phosphate + H(+). The enzyme catalyses 3',5'-cyclic GMP(in) + ATP + H2O = 3',5'-cyclic GMP(out) + ADP + phosphate + H(+). The catalysed reaction is 3',5'-cyclic AMP(in) + ATP + H2O = 3',5'-cyclic AMP(out) + ADP + phosphate + H(+). It carries out the reaction prostaglandin E2(in) + ATP + H2O = prostaglandin E2(out) + ADP + phosphate + H(+). It catalyses the reaction prostaglandin E1(in) + ATP + H2O = prostaglandin E1(out) + ADP + phosphate + H(+). The enzyme catalyses glycodeoxycholate(in) + glutathione(in) + ATP + H2O = glycodeoxycholate(out) + glutathione(out) + ADP + phosphate + H(+). The catalysed reaction is cholate(in) + glutathione(in) + ATP + H2O = cholate(out) + glutathione(out) + ADP + phosphate + H(+). It carries out the reaction glycocholate(in) + glutathione(in) + ATP + H2O = glycocholate(out) + glutathione(out) + ADP + phosphate + H(+). It catalyses the reaction taurocholate(in) + glutathione(in) + ATP + H2O = taurocholate(out) + glutathione(out) + ADP + phosphate + H(+). The enzyme catalyses glycochenodeoxycholate(in) + glutathione(in) + ATP + H2O = glycochenodeoxycholate(out) + glutathione(out) + ADP + phosphate + H(+). The catalysed reaction is taurochenodeoxycholate(in) + glutathione(in) + ATP + H2O = taurochenodeoxycholate(out) + glutathione(out) + ADP + phosphate + H(+). It carries out the reaction glycoursodeoxycholate(in) + glutathione(in) + ATP + H2O = glycoursodeoxycholate(out) + glutathione(out) + ADP + phosphate + H(+). It catalyses the reaction tauroursodeoxycholate(in) + glutathione(in) + ATP + H2O = tauroursodeoxycholate(out) + glutathione(out) + ADP + phosphate + H(+). Its activity is regulated as follows. GSH stimulates the transport of MRP4. Urate inhibits methotrexate transport but stimulates cGMP transport. Nonsteroidal anti-inflammatory drugs (NSAIDs) strongly suppress the transport of MRP4 substrates. Its function is as follows. ATP-dependent transporter of the ATP-binding cassette (ABC) family that actively extrudes physiological compounds and xenobiotics from cells. Transports a range of endogenous molecules that have a key role in cellular communication and signaling, including cyclic nucleotides such as cyclic AMP (cAMP) and cyclic GMP (cGMP), bile acids, steroid conjugates, urate, and prostaglandins. Mediates the ATP-dependent efflux of glutathione conjugates such as leukotriene C4 (LTC4) and leukotriene B4 (LTB4) too. The presence of GSH is necessary for the ATP-dependent transport of LTB4, whereas GSH is not required for the transport of LTC4. Mediates the cotransport of bile acids with reduced glutathione (GSH). Transports a wide range of drugs and their metabolites, including anticancer, antiviral and antibiotics molecules. Confers resistance to anticancer agents such as methotrexate. The chain is ATP-binding cassette sub-family C member 4 (ABCC4) from Homo sapiens (Human).